We begin with the raw amino-acid sequence, 312 residues long: L-lactate dehydrogenase (312 aa).

NAD(+) contacts are provided by valine 14, aspartate 35, and tyrosine 66. Residues glutamine 83, arginine 90, and 122–125 contribute to the substrate site; that span reads NPVD. Residues 120–122 and serine 145 each bind NAD(+); that span reads ASN. Position 150–153 (150–153) interacts with substrate; the sequence is DSAR. Histidine 177 serves as the catalytic Proton acceptor. Tyrosine 220 is modified (phosphotyrosine). Threonine 229 provides a ligand contact to substrate.

This sequence belongs to the LDH/MDH superfamily. LDH family. Homotetramer.

It is found in the cytoplasm. The catalysed reaction is (S)-lactate + NAD(+) = pyruvate + NADH + H(+). It functions in the pathway fermentation; pyruvate fermentation to lactate; (S)-lactate from pyruvate: step 1/1. In terms of biological role, catalyzes the conversion of lactate to pyruvate. This chain is L-lactate dehydrogenase, found in Mycoplasma pneumoniae (strain ATCC 29342 / M129 / Subtype 1) (Mycoplasmoides pneumoniae).